A 559-amino-acid polypeptide reads, in one-letter code: Probable 2-ketoarginine decarboxylase AruI (559 aa).

Residue Glu76 coordinates thiamine diphosphate.

The protein belongs to the TPP enzyme family. The cofactor is thiamine diphosphate.

It carries out the reaction 5-guanidino-2-oxopentanoate + H(+) = 4-guanidinobutanal + CO2. It participates in amino-acid degradation; L-arginine degradation. In terms of biological role, catalyzes the decarboxylation of 2-ketoarginine, leading to the formation of 4-guanidinobutyraldehyde. This chain is Probable 2-ketoarginine decarboxylase AruI (aruI), found in Pseudomonas aeruginosa (strain ATCC 15692 / DSM 22644 / CIP 104116 / JCM 14847 / LMG 12228 / 1C / PRS 101 / PAO1).